The sequence spans 403 residues: Phosphopentomutase (403 aa).

Residues aspartate 13, aspartate 298, histidine 303, aspartate 339, histidine 340, and histidine 351 each contribute to the Mn(2+) site.

The protein belongs to the phosphopentomutase family. The cofactor is Mn(2+).

It is found in the cytoplasm. It carries out the reaction 2-deoxy-alpha-D-ribose 1-phosphate = 2-deoxy-D-ribose 5-phosphate. The catalysed reaction is alpha-D-ribose 1-phosphate = D-ribose 5-phosphate. The protein operates within carbohydrate degradation; 2-deoxy-D-ribose 1-phosphate degradation; D-glyceraldehyde 3-phosphate and acetaldehyde from 2-deoxy-alpha-D-ribose 1-phosphate: step 1/2. In terms of biological role, isomerase that catalyzes the conversion of deoxy-ribose 1-phosphate (dRib-1-P) and ribose 1-phosphate (Rib-1-P) to deoxy-ribose 5-phosphate (dRib-5-P) and ribose 5-phosphate (Rib-5-P), respectively. This Streptococcus pyogenes serotype M28 (strain MGAS6180) protein is Phosphopentomutase.